The primary structure comprises 367 residues: 2-aminoethylphosphonate--pyruvate transaminase (367 aa).

Lys-194 bears the N6-(pyridoxal phosphate)lysine mark.

Belongs to the class-V pyridoxal-phosphate-dependent aminotransferase family. PhnW subfamily. Homodimer. Pyridoxal 5'-phosphate serves as cofactor.

The enzyme catalyses (2-aminoethyl)phosphonate + pyruvate = phosphonoacetaldehyde + L-alanine. Its function is as follows. Involved in phosphonate degradation. In Salmonella heidelberg (strain SL476), this protein is 2-aminoethylphosphonate--pyruvate transaminase.